Consider the following 61-residue polypeptide: MDPKLLDILACPLTKGPLVLSEDKTELISKQAGLAYPIRDGIPVMLESEARSLNVDERLDK.

Belongs to the UPF0434 family.

This is UPF0434 protein PA14_25520 from Pseudomonas aeruginosa (strain UCBPP-PA14).